Here is a 507-residue protein sequence, read N- to C-terminus: Maturase K (507 aa).

It belongs to the intron maturase 2 family. MatK subfamily.

The protein resides in the plastid. The protein localises to the chloroplast. In terms of biological role, usually encoded in the trnK tRNA gene intron. Probably assists in splicing its own and other chloroplast group II introns. In Cananga odorata (Ylang-ylang tree), this protein is Maturase K.